Reading from the N-terminus, the 128-residue chain is Serum amyloid A-4 protein (128 aa).

The first 18 residues, 1-18 (MKLFIGLIFCSLVMGVSS), serve as a signal peptide directing secretion. The tract at residues 93–128 (SSEREEDQVSNRRAEEWGRSGQDPDHFRPAGLPKKY) is disordered. The span at 99–120 (DQVSNRRAEEWGRSGQDPDHFR) shows a compositional bias: basic and acidic residues.

Belongs to the SAA family. Apolipoprotein of the HDL complex.

Its subcellular location is the secreted. In terms of biological role, major acute phase reactant. The protein is Serum amyloid A-4 protein of Sus scrofa (Pig).